Consider the following 253-residue polypeptide: Peptidase inhibitor R3HDML (253 aa).

Positions 1–23 (MPLLSSIVGLTGLLLWMGHTVGA) are cleaved as a signal peptide. The propeptide occupies 24–56 (LRMPNTTLVQGRPKNTAVWPLSGLGVPRHRRKR). Asparagine 28 and asparagine 120 each carry an N-linked (GlcNAc...) asparagine glycan. The 141-residue stretch at 67–207 (LDYHNHIRAS…QQAVYLVCNY (141 aa)) folds into the SCP domain.

The protein belongs to the CRISP family.

It localises to the secreted. Its function is as follows. Putative serine protease inhibitor. The chain is Peptidase inhibitor R3HDML (R3hdml) from Mus musculus (Mouse).